Consider the following 309-residue polypeptide: Ribosomal RNA small subunit methyltransferase H (309 aa).

Residues 33–35, Asp53, Phe79, Asp100, and Gln107 each bind S-adenosyl-L-methionine; that span reads GGH.

The protein belongs to the methyltransferase superfamily. RsmH family.

The protein resides in the cytoplasm. It catalyses the reaction cytidine(1402) in 16S rRNA + S-adenosyl-L-methionine = N(4)-methylcytidine(1402) in 16S rRNA + S-adenosyl-L-homocysteine + H(+). Functionally, specifically methylates the N4 position of cytidine in position 1402 (C1402) of 16S rRNA. The protein is Ribosomal RNA small subunit methyltransferase H of Clostridium kluyveri (strain NBRC 12016).